A 351-amino-acid chain; its full sequence is Foldase protein PrsA 1 (351 aa).

Residues 1-22 form the signal peptide; the sequence is MKNSNKLIASVVTLASVMALAA. The N-palmitoyl cysteine moiety is linked to residue Cys-23. A lipid anchor (S-diacylglycerol cysteine) is attached at Cys-23. The region spanning 145–240 is the PpiC domain; it reads TPTMAVEMIT…KKFYIVKVTK (96 aa). Composition is skewed to low complexity over residues 303–317 and 326–351; these read KTKAASESSTTSESS and ESEQTQTSSAEEPTETEAQTQEPAAQ. Residues 303 to 351 form a disordered region; sequence KTKAASESSTTSESSKAAEENPSESEQTQTSSAEEPTETEAQTQEPAAQ.

Belongs to the PrsA family.

Its subcellular location is the cell membrane. It carries out the reaction [protein]-peptidylproline (omega=180) = [protein]-peptidylproline (omega=0). Functionally, plays a major role in protein secretion by helping the post-translocational extracellular folding of several secreted proteins. This is Foldase protein PrsA 1 (prsA1) from Streptococcus pyogenes serotype M1.